The following is a 71-amino-acid chain: Exodeoxyribonuclease 7 small subunit (71 aa).

It belongs to the XseB family. In terms of assembly, heterooligomer composed of large and small subunits.

The protein resides in the cytoplasm. It catalyses the reaction Exonucleolytic cleavage in either 5'- to 3'- or 3'- to 5'-direction to yield nucleoside 5'-phosphates.. Bidirectionally degrades single-stranded DNA into large acid-insoluble oligonucleotides, which are then degraded further into small acid-soluble oligonucleotides. This Clostridium botulinum (strain ATCC 19397 / Type A) protein is Exodeoxyribonuclease 7 small subunit.